Here is a 127-residue protein sequence, read N- to C-terminus: Cyclin-dependent kinase 2-associated protein 2 (127 aa).

A disordered region spans residues 1 to 49; it reads MSYKPIAPAPSSTPGSSTPGPGTPVPTAGSVPSPSGSVPGAAGPFRPLF. Residues 9–44 show a composition bias toward low complexity; that stretch reads APSSTPGSSTPGPGTPVPTAGSVPSPSGSVPGAAGP. The interaction with CDK2 stretch occupies residues 65–107; sequence PPGAQGSQSTYTDLLSVIEEMGKEIRPTYAGSKSAMERLKRGI.

The protein belongs to the CDK2AP family. In terms of assembly, component of the nucleosome remodeling and deacetylase (NuRD) repressor complex, composed of core proteins MTA1, MTA2, MTA3, RBBP4, RBBP7, HDAC1, HDAC2, MBD2, MBD3, and peripherally associated proteins CDK2AP1, CDK2AP2, GATAD2A, GATAD2B, CHD3, CHD4 and CHD5. The exact stoichiometry of the NuRD complex is unknown, and some subunits such as MBD2 and MBD3, GATAD2A and GATAD2B, and CHD3, CHD4 and CHD5 define mutually exclusive NuRD complexes. Interacts with CDK2AP1. Interacts with CDK2. Interacts with MAPK1. Post-translationally, phosphorylated by MAPK1 and CDK2.

The protein resides in the cytoplasm. The protein localises to the nucleus. Its function is as follows. Acts as a component of the histone deacetylase NuRD complex which participates in the remodeling of chromatin. Inhibits cell cycle G1/S phase transition by repressing CDK2 expression and activation; represses CDK2 activation by inhibiting its interaction with cyclin E and A. Plays a role in regulating the self-renewal of embryonic stem cells (ESCs) and in maintaining cell survival during terminal differentiation of ESCs. Regulates microtubule organization of metaphase II oocytes. This chain is Cyclin-dependent kinase 2-associated protein 2 (CDK2AP2), found in Bos taurus (Bovine).